A 128-amino-acid chain; its full sequence is Large-conductance mechanosensitive channel (128 aa).

Topologically, residues 1–16 are cytoplasmic; sequence MNFIKEFREFAMRGNV. The chain crosses the membrane as a helical span at residues 17–45; it reads VDMAVGVIIGSAFGKIVSSLVSDIFTPVL. Topologically, residues 46-74 are periplasmic; sequence GILTGGIDFKDMKFVLAQAQGDVPAVTLN. Residues 75–94 form a helical membrane-spanning segment; the sequence is YGLFIQNVIDFIIIAFAIFM. At 95–128 the chain is on the cytoplasmic side; the sequence is MIKVINKVRKPEEKKTAPKAETLLTEIRDLLKNK.

Belongs to the MscL family. As to quaternary structure, homopentamer.

It is found in the cell inner membrane. Channel that opens in response to stretch forces in the membrane lipid bilayer. Forms a nonselective ion channel with a conductance of about 4 nanosiemens. May participate in the regulation of osmotic pressure changes within the cell. The chain is Large-conductance mechanosensitive channel from Haemophilus influenzae (strain ATCC 51907 / DSM 11121 / KW20 / Rd).